The sequence spans 437 residues: MNIFEHDIQNLSQGNVVAILGSQWGDEGKGKIIDILSKHSDITCRFNGGANAGHTISVNDKKYALHLLPCGILYENNICVLGNGMVVHLKSLINEINSIGGNIIERLYLSDKSHILFDIHQTIDSIQENRKLKEGKQIGTTKRGIGPCYSTKVSRVGIRLGSLKNFEHFKNLYLKLIDNLMELYDIKDYNKEEELESFYKYHLLLKDRIIDVISFMNNRLNEKKNILIEGANAAMLDIDFGTYPYVTSSCTTVGGIFSGLGINHKKLNLTIGVVKSYLTRVGCGPFMTELNNEIGAYLREKGHEYGTTTKRPRRCGWLDIPMLLYVKCINSIDIINLTKLDVLSGLKEILLCVGYRSKGTGELLQKGCYPVDEDAPENYEPVYEQFQGWEEDISNCQTFEELPENAQKYVLAIEKYVDSPIVWIGVGPNRNNTITKK.

Residues 25–31 (GDEGKGK), 53–55 (GHT), and lysine 62 each bind GTP. The active-site Proton acceptor is the aspartate 26. Mg(2+) is bound by residues aspartate 26 and glycine 53. IMP-binding positions include 26–29 (DEGK) and 51–54 (NAGH). Histidine 54 acts as the Proton donor in catalysis. IMP contacts are provided by threonine 141, arginine 155, asparagine 232, and threonine 247. Threonine 307 provides a ligand contact to GTP. 307 to 313 (TTTKRPR) contacts substrate. Residue arginine 311 coordinates IMP. Residues arginine 313, 339 to 341 (KLD), and 425 to 427 (GVG) each bind GTP.

Belongs to the adenylosuccinate synthetase family. As to quaternary structure, homodimer. Mg(2+) serves as cofactor.

The protein resides in the cytoplasm. The catalysed reaction is IMP + L-aspartate + GTP = N(6)-(1,2-dicarboxyethyl)-AMP + GDP + phosphate + 2 H(+). It participates in purine metabolism; AMP biosynthesis via de novo pathway; AMP from IMP: step 1/2. Its function is as follows. Plays an important role in the salvage pathway for purine nucleotide biosynthesis. Catalyzes the first committed step in the biosynthesis of AMP from IMP. The sequence is that of Adenylosuccinate synthetase from Plasmodium knowlesi (strain H).